A 574-amino-acid polypeptide reads, in one-letter code: MSEEDTSKLRILSVGSNAISAFISWRLSESKACHTTLIWRNRCESVLSEGIRIRSSVFGSTKWKPDVVAPTVEQLAMNSEPFDYIFVCLKILPSVYNLDTAIKEVVTPGHTCIVLNTTGIVGAEKELQHAFPNNPVLSFVLPDQFAQRGPLQFEHTTFAADSAKSVIYVGLTEEEDDVPDSVQDAMIETLTLTLEAGGVSCDFLSKIQKKQWETGVGHMCFYPLSIINDEPNLALMYRLKSFAKVIDGLMDEAFSIAQAQGCEFEPEKLDVLKRHIVNRMLATPRPSYPYQDYIAHRPLEVAVLLGYPVEIAKELGVSVPRMETLLALFDAKNKRNLTVRAGTPQSSPNFNPAMRRSPVGAASRSPSRSTIGISNRIGSVDDLLNTRQFTSSPIGGSMPKGPNSIYKIPSASMVNLSSPLVTSPSGLNPTGRPSRFGGRVRGNPLTMNKAGSVSDLLSTSTNMASSDALETASMIGVPSAMPPNSFDMLTLTQRRNRRNNQSSSPPAPSDRRYTMGARRPVQTRGMTDSVIPILEDPMSTLYDTSRYPTRNSKPATPKASRPPSIASTVHRRMD.

The segment at 339–374 (VRAGTPQSSPNFNPAMRRSPVGAASRSPSRSTIGIS) is disordered. Thr343 is subject to Phosphothreonine. Polar residues predominate over residues 364–374 (RSPSRSTIGIS). Residue Ser392 is modified to Phosphoserine. Disordered stretches follow at residues 422–451 (TSPSGLNPTGRPSRFGGRVRGNPLTMNKAG) and 495–574 (RNRR…RRMD). The segment covering 541-554 (LYDTSRYPTRNSKP) has biased composition (polar residues).

Its subcellular location is the cytoplasm. In terms of biological role, has a role in meiosis. The chain is Meiotically up-regulated gene 72 protein (mug72) from Schizosaccharomyces pombe (strain 972 / ATCC 24843) (Fission yeast).